The chain runs to 496 residues: Chromosomal replication initiator protein DnaA (496 aa).

The tract at residues methionine 1 to glutamine 76 is domain I, interacts with DnaA modulators. The segment at glutamine 76–serine 150 is domain II. Residues proline 151 to glutamine 373 are domain III, AAA+ region. Residues glycine 197, glycine 199, lysine 200, and threonine 201 each contribute to the ATP site. Residues serine 374–alanine 496 form a domain IV, binds dsDNA region.

It belongs to the DnaA family. Oligomerizes as a right-handed, spiral filament on DNA at oriC.

The protein localises to the cytoplasm. Plays an essential role in the initiation and regulation of chromosomal replication. ATP-DnaA binds to the origin of replication (oriC) to initiate formation of the DNA replication initiation complex once per cell cycle. Binds the DnaA box (a 9 base pair repeat at the origin) and separates the double-stranded (ds)DNA. Forms a right-handed helical filament on oriC DNA; dsDNA binds to the exterior of the filament while single-stranded (ss)DNA is stabiized in the filament's interior. The ATP-DnaA-oriC complex binds and stabilizes one strand of the AT-rich DNA unwinding element (DUE), permitting loading of DNA polymerase. After initiation quickly degrades to an ADP-DnaA complex that is not apt for DNA replication. Binds acidic phospholipids. The chain is Chromosomal replication initiator protein DnaA from Brucella suis biovar 1 (strain 1330).